An 849-amino-acid polypeptide reads, in one-letter code: DNA mismatch repair protein MutS (849 aa).

Residue 602–609 (GPNMSGKS) coordinates ATP.

It belongs to the DNA mismatch repair MutS family.

This protein is involved in the repair of mismatches in DNA. It is possible that it carries out the mismatch recognition step. This protein has a weak ATPase activity. This is DNA mismatch repair protein MutS from Streptococcus sanguinis (strain SK36).